The chain runs to 513 residues: ATP synthase subunit alpha (513 aa).

169–176 (GDRQTGKT) provides a ligand contact to ATP.

Belongs to the ATPase alpha/beta chains family. In terms of assembly, F-type ATPases have 2 components, CF(1) - the catalytic core - and CF(0) - the membrane proton channel. CF(1) has five subunits: alpha(3), beta(3), gamma(1), delta(1), epsilon(1). CF(0) has three main subunits: a(1), b(2) and c(9-12). The alpha and beta chains form an alternating ring which encloses part of the gamma chain. CF(1) is attached to CF(0) by a central stalk formed by the gamma and epsilon chains, while a peripheral stalk is formed by the delta and b chains.

Its subcellular location is the cell inner membrane. The enzyme catalyses ATP + H2O + 4 H(+)(in) = ADP + phosphate + 5 H(+)(out). In terms of biological role, produces ATP from ADP in the presence of a proton gradient across the membrane. The alpha chain is a regulatory subunit. In Cupriavidus necator (strain ATCC 17699 / DSM 428 / KCTC 22496 / NCIMB 10442 / H16 / Stanier 337) (Ralstonia eutropha), this protein is ATP synthase subunit alpha.